The following is a 397-amino-acid chain: uncharacterized protein (397 aa).

4 residues coordinate [4Fe-4S] cluster: C8, C14, C17, and C95. Q229, Y258, E279, and D325 together coordinate S-adenosyl-L-methionine. C352 serves as the catalytic Nucleophile.

It belongs to the class I-like SAM-binding methyltransferase superfamily. RNA M5U methyltransferase family.

This is an uncharacterized protein from Chlamydia muridarum (strain MoPn / Nigg).